The primary structure comprises 348 residues: Actin maturation protease (348 aa).

The segment covering methionine 1–threonine 18 has biased composition (pro residues). The interval methionine 1 to phenylalanine 64 is disordered. Positions asparagine 34–serine 48 are enriched in low complexity. The span at valine 49–arginine 60 shows a compositional bias: pro residues. The peptidase C39-like stretch occupies residues serine 121–glycine 241. Residue cysteine 129 is part of the active site. Serine 313 is subject to Phosphoserine.

Belongs to the ACTMAP family. In terms of assembly, interacts (via N-terminus) with PFN2; the interaction may facilitate efficient cleavage of the acetylated N-terminus of immature actin. Interacts with PFN1.

Its subcellular location is the cytoplasm. It carries out the reaction N-terminal N(alpha)-acetyl-L-methionyl-L-aspartyl-[protein] + H2O = N-terminal L-aspartyl-[protein] + N-acetyl-L-methionine. The catalysed reaction is N-terminal N(alpha)-acetyl-L-methionyl-L-glutamyl-[protein] + H2O = N-terminal L-glutamyl-[protein] + N-acetyl-L-methionine. The enzyme catalyses N-terminal N(alpha)-acetyl-L-cysteinyl-L-aspartyl-[protein] + H2O = N-terminal L-aspartyl-[protein] + N-acetyl-L-cysteine. It catalyses the reaction N-terminal N(alpha)-acetyl-L-cysteinyl-L-glutamyl-[protein] + H2O = N-terminal L-glutamyl-[protein] + N-acetyl-L-cysteine. In terms of biological role, actin maturation protease that specifically mediates the cleavage of immature acetylated N-terminal actin, thereby contributing to actin maturation. Cleaves N-terminal acetylated methionine of immature cytoplasmic beta- and gamma-actins ACTB and ACTG1 after translation. Cleaves N-terminal acetylated cysteine of muscle alpha-actins ACTA1, ACTC1 and ACTA2 after canonical removal of N-terminal methionine. This Bos taurus (Bovine) protein is Actin maturation protease.